The sequence spans 157 residues: Tripartite terminase subunit 2 (157 aa).

The tract at residues 1–69 is disordered; it reads MSWAKQRVPF…DGEDGHALPD (69 aa). Acidic residues predominate over residues 11–27; that stretch reads LDDDDGEEENDVQDDVD.

It belongs to the herpesviridae TRM2 protein family. As to quaternary structure, associates with TRM1 and TRM3 to form the tripartite terminase complex.

The protein localises to the host nucleus. Functionally, component of the molecular motor that translocates viral genomic DNA in empty capsid during DNA packaging. Forms a tripartite terminase complex together with TRM1 and TRM3 in the host cytoplasm. Once the complex reaches the host nucleus, it interacts with the capsid portal vertex. This portal forms a ring in which genomic DNA is translocated into the capsid. This Homo sapiens (Human) protein is Tripartite terminase subunit 2.